The sequence spans 352 residues: Fe(3+) ions import ATP-binding protein FbpC (352 aa).

Residues 5–239 (LHIGHLSKSF…PADLDAALFI (235 aa)) enclose the ABC transporter domain. Residue 37–44 (GASGCGKT) coordinates ATP.

This sequence belongs to the ABC transporter superfamily. Fe(3+) ion importer (TC 3.A.1.10) family. As to quaternary structure, the complex is composed of two ATP-binding proteins (FbpC), two transmembrane proteins (FbpB) and a solute-binding protein (FbpA).

Its subcellular location is the cell inner membrane. The enzyme catalyses Fe(3+)(out) + ATP + H2O = Fe(3+)(in) + ADP + phosphate + H(+). In terms of biological role, part of the ABC transporter complex FbpABC involved in Fe(3+) ions import. Responsible for energy coupling to the transport system. The sequence is that of Fe(3+) ions import ATP-binding protein FbpC from Neisseria meningitidis serogroup A / serotype 4A (strain DSM 15465 / Z2491).